The chain runs to 327 residues: GPI-linked NAD(P)(+)--arginine ADP-ribosyltransferase 1 (327 aa).

Positions 1 to 22 (MWVPAVANLLLLSLGLLEAIQA) are cleaved as a signal peptide. Intrachain disulfides connect Cys-53-Cys-277 and Cys-174-Cys-224. Asn-65 is a glycosylation site (N-linked (GlcNAc...) asparagine). Positions 73–273 (KVYADGWALA…IYLKALGKRS (201 aa)) constitute a TR mART core domain. NAD(+)-binding residues include Tyr-121 and Arg-179. Catalysis depends on residues Arg-179 and Ser-202. Ser-233 contributes to the NAD(+) binding site. Glu-240 is an active-site residue. A glycan (N-linked (GlcNAc...) asparagine) is linked at Asn-253. The GPI-anchor amidated serine moiety is linked to residue Ser-295. The propeptide at 296–327 (ASAQERLSTAWSLLLLLAFLAVGPFPGSPGLF) is removed in mature form.

The protein belongs to the Arg-specific ADP-ribosyltransferase family. Primarily in skeletal and cardiac muscle.

Its subcellular location is the sarcoplasmic reticulum membrane. It catalyses the reaction L-arginyl-[protein] + NAD(+) = N(omega)-(ADP-D-ribosyl)-L-arginyl-[protein] + nicotinamide + H(+). Functionally, has ADP-ribosyltransferase activity toward GLP1R. This chain is GPI-linked NAD(P)(+)--arginine ADP-ribosyltransferase 1 (ART1), found in Oryctolagus cuniculus (Rabbit).